A 384-amino-acid polypeptide reads, in one-letter code: Probable endopolygalacturonase C (384 aa).

Residues Met-1 to Ala-19 form the signal peptide. A propeptide spanning residues Ala-20–Lys-40 is cleaved from the precursor. A disulfide bond links Cys-45 and Cys-63. 2 PbH1 repeats span residues Ala-176–Glu-207 and Ser-208–Ser-229. Catalysis depends on Asp-222, which acts as the Proton donor. The cysteines at positions 224 and 240 are disulfide-linked. The active site involves His-244. 2 PbH1 repeats span residues Arg-254 to Ala-280 and Ile-288 to Gln-310. The N-linked (GlcNAc...) asparagine glycan is linked to Asn-261. 2 disulfides stabilise this stretch: Cys-349-Cys-354 and Cys-373-Cys-382.

This sequence belongs to the glycosyl hydrolase 28 family.

The protein localises to the secreted. The enzyme catalyses (1,4-alpha-D-galacturonosyl)n+m + H2O = (1,4-alpha-D-galacturonosyl)n + (1,4-alpha-D-galacturonosyl)m.. Functionally, involved in maceration and soft-rotting of plant tissue. Hydrolyzes the 1,4-alpha glycosidic bonds of de-esterified pectate in the smooth region of the plant cell wall. The polypeptide is Probable endopolygalacturonase C (pgaC) (Aspergillus aculeatus).